Consider the following 354-residue polypeptide: Methionine import ATP-binding protein MetN (354 aa).

The ABC transporter domain occupies 8–250 (LDHIDITFRQ…PKEALTQEFI (243 aa)). 42 to 49 (GYSGAGKS) provides a ligand contact to ATP.

The protein belongs to the ABC transporter superfamily. Methionine importer (TC 3.A.1.24) family. The complex is composed of two ATP-binding proteins (MetN), two transmembrane proteins (MetI) and a solute-binding protein (MetQ).

It localises to the cell membrane. The catalysed reaction is L-methionine(out) + ATP + H2O = L-methionine(in) + ADP + phosphate + H(+). It carries out the reaction D-methionine(out) + ATP + H2O = D-methionine(in) + ADP + phosphate + H(+). In terms of biological role, part of the ABC transporter complex MetNIQ involved in methionine import. Responsible for energy coupling to the transport system. The polypeptide is Methionine import ATP-binding protein MetN (Streptococcus pyogenes serotype M1).